The following is a 235-amino-acid chain: Orotidine 5'-phosphate decarboxylase (235 aa).

Residues Asp12, Lys34, 61-70 (DMKLLDIDNT), Thr116, Arg177, Gln186, and Arg207 contribute to the substrate site. Lys63 functions as the Proton donor in the catalytic mechanism.

Belongs to the OMP decarboxylase family. Type 1 subfamily. As to quaternary structure, homodimer.

It catalyses the reaction orotidine 5'-phosphate + H(+) = UMP + CO2. Its pathway is pyrimidine metabolism; UMP biosynthesis via de novo pathway; UMP from orotate: step 2/2. Functionally, catalyzes the decarboxylation of orotidine 5'-monophosphate (OMP) to uridine 5'-monophosphate (UMP). This is Orotidine 5'-phosphate decarboxylase from Rhizobium etli (strain CIAT 652).